Consider the following 212-residue polypeptide: Protein-L-isoaspartate O-methyltransferase (212 aa).

The active site involves Ser-60.

The protein belongs to the methyltransferase superfamily. L-isoaspartyl/D-aspartyl protein methyltransferase family.

It localises to the cytoplasm. It carries out the reaction [protein]-L-isoaspartate + S-adenosyl-L-methionine = [protein]-L-isoaspartate alpha-methyl ester + S-adenosyl-L-homocysteine. Catalyzes the methyl esterification of L-isoaspartyl residues in peptides and proteins that result from spontaneous decomposition of normal L-aspartyl and L-asparaginyl residues. It plays a role in the repair and/or degradation of damaged proteins. The sequence is that of Protein-L-isoaspartate O-methyltransferase from Pseudomonas putida (strain W619).